The primary structure comprises 76 residues: Zinc finger protein 706 (76 aa).

Residues 1 to 13 (MARGQQKIQSQQK) show a composition bias toward low complexity. Disordered stretches follow at residues 1 to 32 (MARG…QKAA) and 53 to 76 (TFKQ…DVQA). Basic and acidic residues-rich tracts occupy residues 17-31 (KQAE…DQKA) and 53-62 (TFKQHFESKH). Residues 39 to 62 (YTCTVCRTQMPDPKTFKQHFESKH) form a C2H2-type zinc finger.

It is found in the cytoplasm. The protein resides in the nucleus. Functionally, transcription repressor involved in the exit of embryonic stem cells (ESCs) from self-renewal. The polypeptide is Zinc finger protein 706 (Gallus gallus (Chicken)).